Reading from the N-terminus, the 549-residue chain is Probable chaperonin-like protein PrmG (549 aa).

It belongs to the chaperonin (HSP60) family.

Probably plays an essential role in the productive folding of PrmA, and thus in the formation of the active PrmABCD complex. This is Probable chaperonin-like protein PrmG (prmG) from Rhodococcus jostii (strain RHA1).